A 307-amino-acid chain; its full sequence is tRNA N(3)-methylcytidine methyltransferase trm140 (307 aa).

S-adenosyl-L-methionine contacts are provided by Trp83, Tyr87, Gly125, Asp150, Asp176, Leu177, and Ile197.

The protein belongs to the methyltransferase superfamily. METL family.

The catalysed reaction is cytidine(32) in tRNA(Thr) + S-adenosyl-L-methionine = N(3)-methylcytidine(32) in tRNA(Thr) + S-adenosyl-L-homocysteine + H(+). Functionally, S-adenosyl-L-methionine-dependent methyltransferase that mediates N(3)-methylcytidine modification of residue 32 of the tRNA anticodon loop of tRNA(Thr). Does not catalyze N(3)-methylcytidine modification of tRNA(Ser). In Schizosaccharomyces pombe (strain 972 / ATCC 24843) (Fission yeast), this protein is tRNA N(3)-methylcytidine methyltransferase trm140.